The following is a 550-amino-acid chain: Hydroxylamine reductase (550 aa).

Residues Cys5, Cys8, Cys17, and Cys23 each contribute to the [4Fe-4S] cluster site. 8 residues coordinate hybrid [4Fe-2O-2S] cluster: His250, Glu274, Cys319, Cys405, Cys433, Cys458, Glu492, and Lys494. Cys405 bears the Cysteine persulfide mark.

Belongs to the HCP family. Requires [4Fe-4S] cluster as cofactor. The cofactor is hybrid [4Fe-2O-2S] cluster.

The protein localises to the cytoplasm. It carries out the reaction A + NH4(+) + H2O = hydroxylamine + AH2 + H(+). Its function is as follows. Catalyzes the reduction of hydroxylamine to form NH(3) and H(2)O. The protein is Hydroxylamine reductase of Geobacter sulfurreducens (strain ATCC 51573 / DSM 12127 / PCA).